A 370-amino-acid chain; its full sequence is DNA replication and repair protein RecF (370 aa).

30-37 contributes to the ATP binding site; it reads GENAQGKT.

Belongs to the RecF family.

It localises to the cytoplasm. In terms of biological role, the RecF protein is involved in DNA metabolism; it is required for DNA replication and normal SOS inducibility. RecF binds preferentially to single-stranded, linear DNA. It also seems to bind ATP. This Listeria welshimeri serovar 6b (strain ATCC 35897 / DSM 20650 / CCUG 15529 / CIP 8149 / NCTC 11857 / SLCC 5334 / V8) protein is DNA replication and repair protein RecF.